Consider the following 392-residue polypeptide: Probable Ni/Fe-hydrogenase 2 b-type cytochrome subunit (392 aa).

Residues 1–11 (MSHDPQPLGGK) are Periplasmic-facing. A helical transmembrane segment spans residues 12–32 (IISKPVMIFGPLIVICMLLIV). Residues 33–34 (KR) lie on the Cytoplasmic side of the membrane. A helical membrane pass occupies residues 35-55 (LVFGLGSVSDLNGGFPWGVWI). At 56 to 58 (AFD) the chain is on the periplasmic side. A helical membrane pass occupies residues 59 to 79 (LLIGTGFACGGWALAWAVYVF). Topologically, residues 80-90 (NRGQYHPLVRP) are cytoplasmic. The chain crosses the membrane as a helical span at residues 91 to 111 (ALLASLFGYSLGGLSITIDVG). Over 112 to 133 (RYWNLPYFYIPGHFNVNSVLFE) the chain is Periplasmic. A helical transmembrane segment spans residues 134-154 (TAVCMTIYIGVMALEFAPALF). At 155–168 (ERLGWKVSLQRLNK) the chain is on the cytoplasmic side. A helical membrane pass occupies residues 169-189 (VMFFIIALGALLPTMHQSSMG). The Periplasmic portion of the chain corresponds to 190-207 (SLMISAGYKVHPLWQSYE). The chain crosses the membrane as a helical span at residues 208–228 (MLPLFSLLTAFIMGFSIVIFE). The Cytoplasmic segment spans residues 229-249 (GSLVQAGLRGNGPDEKSLFVK). A helical membrane pass occupies residues 250–270 (LTNTISVLLAIFIVLRFGELI). The Periplasmic segment spans residues 271 to 281 (YRDKLSLAFAG). A helical transmembrane segment spans residues 282-302 (DFYSVMFWIEVLLMLFPLVVL). At 303–333 (RVAKLRNDSRMLFLSALSALLGCATWRLTYS) the chain is on the cytoplasmic side. A helical transmembrane segment spans residues 334 to 354 (LVAFNPGGGYAYFPTWEELLI). Position 355 (S355) is a topological domain, periplasmic. Residues 356 to 376 (IGFVAIEICAYIVLIRLLPIL) form a helical membrane-spanning segment. At 377–392 (PPLKQNDHNRHEASKA) the chain is on the cytoplasmic side.

It belongs to the NrfD family.

The protein resides in the cell inner membrane. Functionally, probable b-type cytochrome. In Escherichia coli (strain K12), this protein is Probable Ni/Fe-hydrogenase 2 b-type cytochrome subunit (hybB).